We begin with the raw amino-acid sequence, 768 residues long: Kelch domain-containing protein 7A (768 aa).

Residues V12–Y29 form a helical membrane-spanning segment. Residues P35 to M210 form a disordered region. At S77 the chain carries Phosphoserine. The segment covering T104–G118 has biased composition (basic and acidic residues). N-linked (GlcNAc...) asparagine glycosylation occurs at N248. The disordered stretch occupies residues L304–S352. The Kelch 1 repeat unit spans residues T319 to E365. At S356 the chain carries Phosphoserine. Positions D371 to E395 are disordered. 4 Kelch repeats span residues Q483–L529, Y532–G580, H581–C623, and E626–G668.

It localises to the membrane. This is Kelch domain-containing protein 7A (KLHDC7A) from Pongo abelii (Sumatran orangutan).